Consider the following 530-residue polypeptide: Glucocorticoid modulatory element-binding protein 2 (530 aa).

One can recognise an SAND domain in the interval 81–163 (EEGENLEAEI…RKIMDSGELD (83 aa)). Residue C110 participates in Zn(2+) binding. K136, K140, K143, and R154 together coordinate DNA. K155 is covalently cross-linked (Glycyl lysine isopeptide (Lys-Gly) (interchain with G-Cter in SUMO1); alternate). Residue K155 forms a Glycyl lysine isopeptide (Lys-Gly) (interchain with G-Cter in SUMO2); alternate linkage. Zn(2+) contacts are provided by H167, C171, and C175. 2 coiled-coil regions span residues 245 to 270 (LLDE…RVQD) and 304 to 344 (QMDR…SNVL). S373 bears the Phosphoserine mark.

As to quaternary structure, homodimer, and heterodimer of GMEB1 and GMEB2. Interacts with the glucocorticoid receptor (NR3C1). May interact with CREB-binding protein (CBP).

Its subcellular location is the nucleus. The protein localises to the cytoplasm. Trans-acting factor that binds to glucocorticoid modulatory elements (GME) present in the TAT (tyrosine aminotransferase) promoter and increases sensitivity to low concentrations of glucocorticoids. Also binds to the transferrin receptor promoter. This Mus musculus (Mouse) protein is Glucocorticoid modulatory element-binding protein 2 (Gmeb2).